The chain runs to 415 residues: Peptide chain release factor subunit 1 (415 aa).

Belongs to the eukaryotic release factor 1 family. In terms of assembly, heterodimer of two subunits, one of which binds GTP.

It is found in the cytoplasm. Functionally, directs the termination of nascent peptide synthesis (translation) in response to the termination codons UAA, UAG and UGA. The sequence is that of Peptide chain release factor subunit 1 from Thermococcus kodakarensis (strain ATCC BAA-918 / JCM 12380 / KOD1) (Pyrococcus kodakaraensis (strain KOD1)).